The sequence spans 200 residues: MTIRYPNGKRYNQALQPQKTKMKKHTYGNRGMSLEEELNETNQYYLSHNIACVHKKPTPLQIVKVDYPARSAAVVREAYFKQPSTTDYNGVYKGKYIDFEAKETKNKTNFPLQNFHLHQIEHMKQVIAHDGIAFVIIKFTLYNEIYLLDAKHVISFWNRKDTGGRKSITKQEIEEHGSLLSCGYHPRIDYISILDMVYFS.

Positions 85, 87, 100, and 119 each coordinate Mg(2+).

This sequence belongs to the RecU family. Mg(2+) is required as a cofactor.

The protein localises to the cytoplasm. It catalyses the reaction Endonucleolytic cleavage at a junction such as a reciprocal single-stranded crossover between two homologous DNA duplexes (Holliday junction).. Its function is as follows. Endonuclease that resolves Holliday junction intermediates in genetic recombination. Cleaves mobile four-strand junctions by introducing symmetrical nicks in paired strands. Promotes annealing of linear ssDNA with homologous dsDNA. Required for DNA repair, homologous recombination and chromosome segregation. This chain is Holliday junction resolvase RecU, found in Bacillus cytotoxicus (strain DSM 22905 / CIP 110041 / 391-98 / NVH 391-98).